The primary structure comprises 1041 residues: DNA polymerase catalytic subunit (1041 aa).

The segment at M1–M23 is disordered.

Belongs to the DNA polymerase type-B family.

It localises to the host nucleus. The catalysed reaction is DNA(n) + a 2'-deoxyribonucleoside 5'-triphosphate = DNA(n+1) + diphosphate. The enzyme catalyses Endonucleolytic cleavage to 5'-phosphomonoester.. Replicates viral genomic DNA. The replication complex is composed of six viral proteins: the DNA polymerase, processivity factor, primase, primase-associated factor, helicase, and ssDNA-binding protein. Additionally, the polymerase contains an intrinsic ribonuclease H (RNase H) activity that specifically degrades RNA/DNA heteroduplexes or duplex DNA substrates in the 5' to 3' direction. Therefore, it can catalyze the excision of the RNA primers that initiate the synthesis of Okazaki fragments at a replication fork during viral DNA replication. This is DNA polymerase catalytic subunit from Elephantid herpesvirus 1 (isolate Asian elephant/Berlin/Kiba/1998) (EIHV-1).